A 339-amino-acid polypeptide reads, in one-letter code: Uroporphyrinogen decarboxylase (339 aa).

Substrate is bound by residues 23–27 (RQAGR), Asp-72, Tyr-147, Thr-202, and His-315.

Belongs to the uroporphyrinogen decarboxylase family. In terms of assembly, homodimer.

It is found in the cytoplasm. It carries out the reaction uroporphyrinogen III + 4 H(+) = coproporphyrinogen III + 4 CO2. It functions in the pathway porphyrin-containing compound metabolism; protoporphyrin-IX biosynthesis; coproporphyrinogen-III from 5-aminolevulinate: step 4/4. Its function is as follows. Catalyzes the decarboxylation of four acetate groups of uroporphyrinogen-III to yield coproporphyrinogen-III. The protein is Uroporphyrinogen decarboxylase of Geotalea uraniireducens (strain Rf4) (Geobacter uraniireducens).